The following is a 445-amino-acid chain: GTPase Der (445 aa).

EngA-type G domains follow at residues 3–167 (PVIA…YAGQ) and 180–353 (IKIA…AAAM). Residues 9-16 (GRPNVGKS), 56-60 (DTGGF), 119-122 (NKAE), 186-193 (GRPNVGKS), 233-237 (DTAGL), and 298-301 (NKWD) contribute to the GTP site. The KH-like domain occupies 354–438 (AKLPTPKLTR…PLRIEFRSSN (85 aa)).

It belongs to the TRAFAC class TrmE-Era-EngA-EngB-Septin-like GTPase superfamily. EngA (Der) GTPase family. As to quaternary structure, associates with the 50S ribosomal subunit.

In terms of biological role, GTPase that plays an essential role in the late steps of ribosome biogenesis. This Burkholderia ambifaria (strain ATCC BAA-244 / DSM 16087 / CCUG 44356 / LMG 19182 / AMMD) (Burkholderia cepacia (strain AMMD)) protein is GTPase Der.